The sequence spans 466 residues: Soluble pyridine nucleotide transhydrogenase (466 aa).

FAD is bound at residue 36-45 (ERYQNVGGGC).

Belongs to the class-I pyridine nucleotide-disulfide oxidoreductase family. FAD serves as cofactor.

It is found in the cytoplasm. The catalysed reaction is NAD(+) + NADPH = NADH + NADP(+). In terms of biological role, conversion of NADPH, generated by peripheral catabolic pathways, to NADH, which can enter the respiratory chain for energy generation. This Escherichia coli O6:K15:H31 (strain 536 / UPEC) protein is Soluble pyridine nucleotide transhydrogenase.